Consider the following 292-residue polypeptide: Elongation factor Ts (292 aa).

The involved in Mg(2+) ion dislocation from EF-Tu stretch occupies residues threonine 82 to valine 85.

Belongs to the EF-Ts family.

Its subcellular location is the cytoplasm. Associates with the EF-Tu.GDP complex and induces the exchange of GDP to GTP. It remains bound to the aminoacyl-tRNA.EF-Tu.GTP complex up to the GTP hydrolysis stage on the ribosome. This is Elongation factor Ts from Bordetella parapertussis (strain 12822 / ATCC BAA-587 / NCTC 13253).